A 62-amino-acid polypeptide reads, in one-letter code: Photosystem II reaction center protein Z (62 aa).

A run of 2 helical transmembrane segments spans residues 8–28 (ALLALIFVSFALVVGVPVVFA) and 41–61 (FSGLSLWLLLVFVVGILNSFV).

Belongs to the PsbZ family. PSII is composed of 1 copy each of membrane proteins PsbA, PsbB, PsbC, PsbD, PsbE, PsbF, PsbH, PsbI, PsbJ, PsbK, PsbL, PsbM, PsbT, PsbY, PsbZ, Psb30/Ycf12, at least 3 peripheral proteins of the oxygen-evolving complex and a large number of cofactors. It forms dimeric complexes.

It localises to the plastid. The protein localises to the chloroplast thylakoid membrane. In terms of biological role, controls the interaction of photosystem II (PSII) cores with the light-harvesting antenna, aiding in the dissipation of excitation energy within PSII. PSII is a light-driven water plastoquinone oxidoreductase, using light energy to abstract electrons from H(2)O, generating a proton gradient subsequently used for ATP formation. The polypeptide is Photosystem II reaction center protein Z (Chlamydomonas reinhardtii (Chlamydomonas smithii)).